Here is a 236-residue protein sequence, read N- to C-terminus: Thylakoid lumenal 17.4 kDa protein, chloroplastic (236 aa).

Pentapeptide repeat domains follow at residues 124–163 (TNLKGKTLSAALMVGAKFDGADMTEVVMSKAYAVEASFKG) and 169–208 (AVIDRVNFGKSNLKGAVFRNTVLSGSTFEEANLEDVVFED).

As to quaternary structure, interacts in vitro with LTO1.

It localises to the plastid. The protein localises to the chloroplast thylakoid lumen. This is Thylakoid lumenal 17.4 kDa protein, chloroplastic from Arabidopsis thaliana (Mouse-ear cress).